The sequence spans 1690 residues: DNA-directed RNA polymerase subunit beta' (1690 aa).

Cys63, Cys65, Cys78, and Cys81 together coordinate Zn(2+). Positions 753, 755, and 757 each coordinate Mg(2+). The Zn(2+) site is built by Cys1107, Cys1295, Cys1302, and Cys1305.

Belongs to the RNA polymerase beta' chain family. The RNAP catalytic core consists of 2 alpha, 1 beta, 1 beta' and 1 omega subunit. When a sigma factor is associated with the core the holoenzyme is formed, which can initiate transcription. The cofactor is Mg(2+). Zn(2+) serves as cofactor.

It carries out the reaction RNA(n) + a ribonucleoside 5'-triphosphate = RNA(n+1) + diphosphate. Functionally, DNA-dependent RNA polymerase catalyzes the transcription of DNA into RNA using the four ribonucleoside triphosphates as substrates. This Thermotoga sp. (strain RQ2) protein is DNA-directed RNA polymerase subunit beta'.